The primary structure comprises 61 residues: uncharacterized protein (61 aa).

This is an uncharacterized protein from Escherichia coli O6:K15:H31 (strain 536 / UPEC).